We begin with the raw amino-acid sequence, 746 residues long: Long-chain-alcohol oxidase FAO3 (746 aa).

The helical transmembrane segment at 139-159 threads the bilayer; it reads ILTPIRAAFVYIKVAFLFCFF. 233–248 provides a ligand contact to FAD; it reads CDVVVVGSGSGGGVAA. The active-site Proton acceptor is histidine 677.

This sequence belongs to the GMC oxidoreductase family.

Its subcellular location is the membrane. The enzyme catalyses a long-chain primary fatty alcohol + O2 = a long-chain fatty aldehyde + H2O2. Its function is as follows. Long-chain fatty alcohol oxidase involved in the omega-oxidation pathway of lipid degradation. This is Long-chain-alcohol oxidase FAO3 (FAO3) from Arabidopsis thaliana (Mouse-ear cress).